The primary structure comprises 640 residues: Threonine--tRNA ligase (640 aa).

The 60-residue stretch at 1-60 (MKITFPDGAVKEFEPGVSTADIAASISPGLKKKALAGKLNGELLDLVTPIHEDGAIEIVT) folds into the TGS domain. Positions 241–538 (DHRKLGKELE…LIEEYKGAFP (298 aa)) are catalytic. Residues Cys-334, His-385, and His-515 each coordinate Zn(2+).

Belongs to the class-II aminoacyl-tRNA synthetase family. As to quaternary structure, homodimer. Zn(2+) serves as cofactor.

It is found in the cytoplasm. It carries out the reaction tRNA(Thr) + L-threonine + ATP = L-threonyl-tRNA(Thr) + AMP + diphosphate + H(+). Functionally, catalyzes the attachment of threonine to tRNA(Thr) in a two-step reaction: L-threonine is first activated by ATP to form Thr-AMP and then transferred to the acceptor end of tRNA(Thr). Also edits incorrectly charged L-seryl-tRNA(Thr). The polypeptide is Threonine--tRNA ligase (Listeria monocytogenes serovar 1/2a (strain ATCC BAA-679 / EGD-e)).